Here is a 194-residue protein sequence, read N- to C-terminus: Peptidyl-tRNA hydrolase (194 aa).

Tyr16 is a binding site for tRNA. Catalysis depends on His21, which acts as the Proton acceptor. 3 residues coordinate tRNA: Phe66, Asn68, and Asn114.

Belongs to the PTH family. Monomer.

It localises to the cytoplasm. The enzyme catalyses an N-acyl-L-alpha-aminoacyl-tRNA + H2O = an N-acyl-L-amino acid + a tRNA + H(+). Functionally, hydrolyzes ribosome-free peptidyl-tRNAs (with 1 or more amino acids incorporated), which drop off the ribosome during protein synthesis, or as a result of ribosome stalling. Catalyzes the release of premature peptidyl moieties from peptidyl-tRNA molecules trapped in stalled 50S ribosomal subunits, and thus maintains levels of free tRNAs and 50S ribosomes. The protein is Peptidyl-tRNA hydrolase of Geobacter metallireducens (strain ATCC 53774 / DSM 7210 / GS-15).